The primary structure comprises 149 residues: MRSVVQRVTQASVTVEGEVVGRIGAGLLVLFGVGRGDTEADLNWMVDKIAGLRLFEDGEGKMNRSVQDVGGEILMVSQFTLYGDCRKGKRPSFATAAPPETAGELFQQAVAKMRGYGLHVETGVFQAEMQVALVNDGPVTLLIDSEKNF.

The short motif at 137-138 is the Gly-cisPro motif, important for rejection of L-amino acids element; sequence GP.

This sequence belongs to the DTD family. As to quaternary structure, homodimer.

Its subcellular location is the cytoplasm. It carries out the reaction glycyl-tRNA(Ala) + H2O = tRNA(Ala) + glycine + H(+). The catalysed reaction is a D-aminoacyl-tRNA + H2O = a tRNA + a D-alpha-amino acid + H(+). Its function is as follows. An aminoacyl-tRNA editing enzyme that deacylates mischarged D-aminoacyl-tRNAs. Also deacylates mischarged glycyl-tRNA(Ala), protecting cells against glycine mischarging by AlaRS. Acts via tRNA-based rather than protein-based catalysis; rejects L-amino acids rather than detecting D-amino acids in the active site. By recycling D-aminoacyl-tRNA to D-amino acids and free tRNA molecules, this enzyme counteracts the toxicity associated with the formation of D-aminoacyl-tRNA entities in vivo and helps enforce protein L-homochirality. The chain is D-aminoacyl-tRNA deacylase from Desulfitobacterium hafniense (strain DSM 10664 / DCB-2).